We begin with the raw amino-acid sequence, 244 residues long: Small ribosomal subunit protein uS3 (244 aa).

A KH type-2 domain is found at 39 to 107; that stretch reads IRELIKKESF…KLIINVEEIK (69 aa). A disordered region spans residues 216–244; that stretch reads LPVYKNKKNDKNKKRRNNNRKGKSQAAKN. Over residues 220–238 the composition is skewed to basic residues; sequence KNKKNDKNKKRRNNNRKGK.

The protein belongs to the universal ribosomal protein uS3 family. In terms of assembly, part of the 30S ribosomal subunit. Forms a tight complex with proteins S10 and S14.

Functionally, binds the lower part of the 30S subunit head. Binds mRNA in the 70S ribosome, positioning it for translation. This Finegoldia magna (strain ATCC 29328 / DSM 20472 / WAL 2508) (Peptostreptococcus magnus) protein is Small ribosomal subunit protein uS3.